Reading from the N-terminus, the 125-residue chain is Oxytocin-neurophysin 1 (125 aa).

The N-terminal stretch at M1–A19 is a signal peptide. A disulfide bridge links C20 with C25. Residue G28 is modified to Glycine amide. 7 disulfide bridges follow: C41–C85, C44–C58, C52–C75, C59–C65, C92–C104, C98–C116, and C105–C110.

Belongs to the vasopressin/oxytocin family. Interacts with oxytocin receptor (Ki=1.5 nM). Interacts with vasopressin V1aR/AVPR1A (Ki=37 nM), V1bR/AVPR1B (Ki=222 nM), and V2R/AVPR2 receptors (Ki=823 nM).

In terms of biological role, neurophysin 1 specifically binds oxytocin. Functionally, oxytocin causes contraction of the smooth muscle of the uterus and of the mammary gland. Acts by binding to oxytocin receptor (OXTR). In Rattus norvegicus (Rat), this protein is Oxytocin-neurophysin 1 (Oxt).